A 199-amino-acid chain; its full sequence is Dephospho-CoA kinase (199 aa).

The 189-residue stretch at 11 to 199 (RIGLTGGIAS…DLHDQLDALL (189 aa)) folds into the DPCK domain. An ATP-binding site is contributed by 19 to 24 (ASGKSS).

It belongs to the CoaE family.

It localises to the cytoplasm. It carries out the reaction 3'-dephospho-CoA + ATP = ADP + CoA + H(+). It functions in the pathway cofactor biosynthesis; coenzyme A biosynthesis; CoA from (R)-pantothenate: step 5/5. In terms of biological role, catalyzes the phosphorylation of the 3'-hydroxyl group of dephosphocoenzyme A to form coenzyme A. The protein is Dephospho-CoA kinase of Synechococcus sp. (strain CC9902).